Reading from the N-terminus, the 296-residue chain is Nitrogenase iron protein 2 (296 aa).

Residue 11-18 (GKGGIGKS) coordinates ATP. Position 99 (Cys-99) interacts with [4Fe-4S] cluster. Position 102 is an ADP-ribosylarginine; by dinitrogenase reductase ADP-ribosyltransferase (Arg-102). Cys-133 lines the [4Fe-4S] cluster pocket.

This sequence belongs to the NifH/BchL/ChlL family. In terms of assembly, homodimer. [4Fe-4S] cluster serves as cofactor. The reversible ADP-ribosylation of Arg-102 inactivates the nitrogenase reductase and regulates nitrogenase activity.

It carries out the reaction N2 + 8 reduced [2Fe-2S]-[ferredoxin] + 16 ATP + 16 H2O = H2 + 8 oxidized [2Fe-2S]-[ferredoxin] + 2 NH4(+) + 16 ADP + 16 phosphate + 6 H(+). In terms of biological role, the key enzymatic reactions in nitrogen fixation are catalyzed by the nitrogenase complex, which has 2 components: the iron protein and the molybdenum-iron protein. The sequence is that of Nitrogenase iron protein 2 (nifH2) from Azorhizobium caulinodans (strain ATCC 43989 / DSM 5975 / JCM 20966 / LMG 6465 / NBRC 14845 / NCIMB 13405 / ORS 571).